Here is a 188-residue protein sequence, read N- to C-terminus: C-type lectin domain family 5 member A (188 aa).

Residues 1–4 (MNWH) lie on the Cytoplasmic side of the membrane. Residues 5 to 27 (MIISGLIVVVLKVVGMTLFLLYF) traverse the membrane as a helical; Signal-anchor for type II membrane protein segment. Residues 28-188 (PQIFNKSNDG…YRRICEKNAK (161 aa)) lie on the Extracellular side of the membrane. The N-linked (GlcNAc...) asparagine glycan is linked to asparagine 32. Cysteines 71 and 82 form a disulfide. Positions 78–184 (YQARCFFLST…CDISYRRICE (107 aa)) constitute a C-type lectin domain. N-linked (GlcNAc...) asparagine glycans are attached at residues asparagine 93, asparagine 144, and asparagine 151. 2 disulfide bridges follow: cysteine 99–cysteine 183 and cysteine 161–cysteine 175.

In terms of assembly, monomer. Homodimer. The majority of CLEC5A is expressed as a monomeric form on macrophages. Interacts with TYROBP/DAP12. The interaction with TYROBP is required for CLEC5A cell surface expression. Interacts with HCST/DAP10. Forms a CLEC5A/TYROBP/HCST trimolecular complex depending almost solely on TYROBP. (Microbial infection) Interacts with dengue virus envelope protein E. Post-translationally, N-glycosylated. Contains sialic acid residues. As to expression, highly expressed in bone marrow with lower levels in synovium, lung and bronchus. Expressed in peripheral blood monocytes and in the monocyte/macrophage cell lines U-937 and Mono-Mac-6, but not in cell lines of other origins. Expression is down-regulated when monocytes differentiate into dendritic cells.

It localises to the cell membrane. In terms of biological role, functions as a positive regulator of osteoclastogenesis. Cell surface receptor that signals via TYROBP. Regulates inflammatory responses. Functionally, (Microbial infection) Critical macrophage receptor for dengue virus serotypes 1-4. The binding of dengue virus to CLEC5A triggers signaling through the phosphorylation of TYROBP. This interaction does not result in viral entry, but stimulates pro-inflammatory cytokine release. The sequence is that of C-type lectin domain family 5 member A (CLEC5A) from Homo sapiens (Human).